A 162-amino-acid polypeptide reads, in one-letter code: Ciliary microtubule inner protein 5 (162 aa).

The tract at residues 1-44 is disordered; that stretch reads MGSHPTPGLQRTTSAGYRLPPTRPPASVSPAARGGPMASRGLAG.

Its subcellular location is the cell projection. It is found in the cilium. In Homo sapiens (Human), this protein is Ciliary microtubule inner protein 5.